Reading from the N-terminus, the 903-residue chain is Probable dipeptidyl-aminopeptidase B (903 aa).

The segment at 1–83 (MGKFEDDGNS…PLISSGTKTG (83 aa)) is disordered. Residues 1 to 90 (MGKFEDDGNS…KTGSSSRLRK (90 aa)) lie on the Cytoplasmic side of the membrane. Residues 10-37 (SESVPLTRQRSESLASQTSTDSGLSIAS) are compositionally biased toward polar residues. A helical; Signal-anchor for type II membrane protein transmembrane segment spans residues 91-111 (IVWLLVLLCVGGWVLSFVLFL). The Vacuolar portion of the chain corresponds to 112–903 (TQKRPDTAAL…TANPKPQEST (792 aa)). Residues 121–143 (LSSASTVEIHEPGPATGGTSHGK) form a disordered region. 3 N-linked (GlcNAc...) asparagine glycosylation sites follow: asparagine 268, asparagine 349, and asparagine 640. The active-site Charge relay system is serine 754. Asparagine 808 carries an N-linked (GlcNAc...) asparagine glycan. Residues aspartate 831 and histidine 864 each act as charge relay system in the active site.

The protein belongs to the peptidase S9B family.

The protein resides in the vacuole membrane. It carries out the reaction Release of an N-terminal dipeptide, Xaa-Yaa-|-Zaa-, from a polypeptide, preferentially when Yaa is Pro, provided Zaa is neither Pro nor hydroxyproline.. Type IV dipeptidyl-peptidase which removes N-terminal dipeptides sequentially from polypeptides having unsubstituted N-termini provided that the penultimate residue is proline. This chain is Probable dipeptidyl-aminopeptidase B (dapB), found in Penicillium rubens (strain ATCC 28089 / DSM 1075 / NRRL 1951 / Wisconsin 54-1255) (Penicillium chrysogenum).